The chain runs to 200 residues: NADH-quinone oxidoreductase subunit C (200 aa).

This sequence belongs to the complex I 30 kDa subunit family. As to quaternary structure, NDH-1 is composed of 14 different subunits. Subunits NuoB, C, D, E, F, and G constitute the peripheral sector of the complex.

The protein localises to the cell inner membrane. It carries out the reaction a quinone + NADH + 5 H(+)(in) = a quinol + NAD(+) + 4 H(+)(out). NDH-1 shuttles electrons from NADH, via FMN and iron-sulfur (Fe-S) centers, to quinones in the respiratory chain. The immediate electron acceptor for the enzyme in this species is believed to be ubiquinone. Couples the redox reaction to proton translocation (for every two electrons transferred, four hydrogen ions are translocated across the cytoplasmic membrane), and thus conserves the redox energy in a proton gradient. The sequence is that of NADH-quinone oxidoreductase subunit C from Parvibaculum lavamentivorans (strain DS-1 / DSM 13023 / NCIMB 13966).